Reading from the N-terminus, the 411-residue chain is 1-deoxy-D-xylulose 5-phosphate reductoisomerase (411 aa).

The NADPH site is built by Thr12, Gly13, Ser14, Ile15, and Asn127. Position 128 (Lys128) interacts with 1-deoxy-D-xylulose 5-phosphate. Glu129 provides a ligand contact to NADPH. Asp153 provides a ligand contact to Mn(2+). Ser154, Glu155, Ser189, and His212 together coordinate 1-deoxy-D-xylulose 5-phosphate. Glu155 is a Mn(2+) binding site. Gly218 contacts NADPH. Residues Ser225, Asn230, Lys231, and Glu234 each coordinate 1-deoxy-D-xylulose 5-phosphate. Mn(2+) is bound at residue Glu234.

This sequence belongs to the DXR family. It depends on Mg(2+) as a cofactor. Mn(2+) is required as a cofactor.

It catalyses the reaction 2-C-methyl-D-erythritol 4-phosphate + NADP(+) = 1-deoxy-D-xylulose 5-phosphate + NADPH + H(+). It functions in the pathway isoprenoid biosynthesis; isopentenyl diphosphate biosynthesis via DXP pathway; isopentenyl diphosphate from 1-deoxy-D-xylulose 5-phosphate: step 1/6. Catalyzes the NADPH-dependent rearrangement and reduction of 1-deoxy-D-xylulose-5-phosphate (DXP) to 2-C-methyl-D-erythritol 4-phosphate (MEP). The polypeptide is 1-deoxy-D-xylulose 5-phosphate reductoisomerase (Colwellia psychrerythraea (strain 34H / ATCC BAA-681) (Vibrio psychroerythus)).